The sequence spans 421 residues: Serine--tRNA ligase (421 aa).

230–232 (TAE) contributes to the L-serine binding site. Position 259–261 (259–261 (RRE)) interacts with ATP. Glu282 is a binding site for L-serine. An ATP-binding site is contributed by 346 to 349 (EISS). Residue Ser380 coordinates L-serine.

This sequence belongs to the class-II aminoacyl-tRNA synthetase family. Type-1 seryl-tRNA synthetase subfamily. Homodimer. The tRNA molecule binds across the dimer.

The protein localises to the cytoplasm. The enzyme catalyses tRNA(Ser) + L-serine + ATP = L-seryl-tRNA(Ser) + AMP + diphosphate + H(+). The catalysed reaction is tRNA(Sec) + L-serine + ATP = L-seryl-tRNA(Sec) + AMP + diphosphate + H(+). It functions in the pathway aminoacyl-tRNA biosynthesis; selenocysteinyl-tRNA(Sec) biosynthesis; L-seryl-tRNA(Sec) from L-serine and tRNA(Sec): step 1/1. Its function is as follows. Catalyzes the attachment of serine to tRNA(Ser). Is also able to aminoacylate tRNA(Sec) with serine, to form the misacylated tRNA L-seryl-tRNA(Sec), which will be further converted into selenocysteinyl-tRNA(Sec). The sequence is that of Serine--tRNA ligase from Methanosarcina acetivorans (strain ATCC 35395 / DSM 2834 / JCM 12185 / C2A).